The sequence spans 103 residues: Large ribosomal subunit protein uL24 (103 aa).

Belongs to the universal ribosomal protein uL24 family. In terms of assembly, part of the 50S ribosomal subunit.

In terms of biological role, one of two assembly initiator proteins, it binds directly to the 5'-end of the 23S rRNA, where it nucleates assembly of the 50S subunit. One of the proteins that surrounds the polypeptide exit tunnel on the outside of the subunit. In Oceanobacillus iheyensis (strain DSM 14371 / CIP 107618 / JCM 11309 / KCTC 3954 / HTE831), this protein is Large ribosomal subunit protein uL24.